Reading from the N-terminus, the 343-residue chain is Glucokinase (343 aa).

18 to 23 (GDIGGT) is a binding site for ATP.

This sequence belongs to the bacterial glucokinase family.

It localises to the cytoplasm. The enzyme catalyses D-glucose + ATP = D-glucose 6-phosphate + ADP + H(+). This is Glucokinase from Brucella melitensis biotype 1 (strain ATCC 23456 / CCUG 17765 / NCTC 10094 / 16M).